The following is a 269-amino-acid chain: Hydroxypyruvate/pyruvate aldolase (269 aa).

The active-site Proton acceptor is the histidine 48. A divalent metal cation contacts are provided by glutamate 152 and aspartate 178.

It belongs to the HpcH/HpaI aldolase family. Requires a divalent metal cation as cofactor.

It carries out the reaction D-glyceraldehyde + pyruvate = 2-dehydro-3-deoxy-L-galactonate. Its function is as follows. Aldolase which can catalyze in vitro the aldolisation reaction between hydroxypyruvate (HPA) or pyruvate (PA) and D-glyceraldehyde (D-GA). The condensation of pyruvate and D-glyceraldehyde produces 2-dehydro-3-deoxy-L-galactonate as the major product. Has weak activity with hydroxypyruvate and D-glyceraldehyde. This Delftia acidovorans (strain DSM 14801 / SPH-1) protein is Hydroxypyruvate/pyruvate aldolase.